The sequence spans 248 residues: 1-(5-phosphoribosyl)-5-[(5-phosphoribosylamino)methylideneamino] imidazole-4-carboxamide isomerase (248 aa).

Asp8 acts as the Proton acceptor in catalysis. Residue Asp129 is the Proton donor of the active site.

It belongs to the HisA/HisF family.

The protein localises to the cytoplasm. It carries out the reaction 1-(5-phospho-beta-D-ribosyl)-5-[(5-phospho-beta-D-ribosylamino)methylideneamino]imidazole-4-carboxamide = 5-[(5-phospho-1-deoxy-D-ribulos-1-ylimino)methylamino]-1-(5-phospho-beta-D-ribosyl)imidazole-4-carboxamide. The protein operates within amino-acid biosynthesis; L-histidine biosynthesis; L-histidine from 5-phospho-alpha-D-ribose 1-diphosphate: step 4/9. The sequence is that of 1-(5-phosphoribosyl)-5-[(5-phosphoribosylamino)methylideneamino] imidazole-4-carboxamide isomerase from Rhizobium etli (strain ATCC 51251 / DSM 11541 / JCM 21823 / NBRC 15573 / CFN 42).